The following is a 629-amino-acid chain: tRNA uridine 5-carboxymethylaminomethyl modification enzyme MnmG (629 aa).

Residues 18–23, Val130, and Ser188 each bind FAD; that span reads GGGHAG. 280–294 lines the NAD(+) pocket; it reads GPRYCPSIEDKVVRF. Gln377 provides a ligand contact to FAD.

It belongs to the MnmG family. As to quaternary structure, homodimer. Heterotetramer of two MnmE and two MnmG subunits. It depends on FAD as a cofactor.

It localises to the cytoplasm. NAD-binding protein involved in the addition of a carboxymethylaminomethyl (cmnm) group at the wobble position (U34) of certain tRNAs, forming tRNA-cmnm(5)s(2)U34. The protein is tRNA uridine 5-carboxymethylaminomethyl modification enzyme MnmG of Granulibacter bethesdensis (strain ATCC BAA-1260 / CGDNIH1).